The sequence spans 450 residues: Keratin, type I cytoskeletal 25 (450 aa).

Residues 1-24 (MSLRLPSGSRRASPRPTTGSLRLS) are disordered. Positions 1–78 (MSLRLPSGSR…MNEGGLLSGN (78 aa)) are head. The tract at residues 79–114 (EKVTMQNLNDRLASYLENVRALEEANADLEQKIKGW) is coil 1A. An IF rod domain is found at 79–394 (EKVTMQNLND…LLIGGDDGAC (316 aa)). The linker 1 stretch occupies residues 115–136 (YEKFGPGSCRGLDHDYSRYFPI). Residues 137 to 228 (IEDLKNQIIA…KNHKEEMQVL (92 aa)) form a coil 1B region. A linker 12 region spans residues 229–251 (QCAAGGNVNVEMNAAPGVDLTVL). The coil 2 stretch occupies residues 252–390 (LNNMRAEYEA…ETYCLLIGGD (139 aa)). Residues 391–450 (DGACKSGGYKSKDYAAGNMGNQMKDPIKAIVVKKVLEEVDQRSKILTTRLHSLEEKSQSN) form a tail region. The residue at position 442 (Ser-442) is a Phosphoserine.

Belongs to the intermediate filament family. As to quaternary structure, heterodimer of a type I and a type II keratin. Heterodimer with type II keratin KRT5 leading to the formation of keratin intermediate filament (KIF) network. Interacts with KRT6A to form filaments.

It localises to the cytoplasm. Functionally, essential for the proper assembly of type I and type II keratin protein complexes and formation of keratin intermediate filaments in the inner root sheath (irs). Plays a role in the cytoskeleton organization. This Capra hircus (Goat) protein is Keratin, type I cytoskeletal 25.